The chain runs to 282 residues: 2-dehydro-3-deoxyphosphooctonate aldolase (282 aa).

Belongs to the KdsA family.

It is found in the cytoplasm. It carries out the reaction D-arabinose 5-phosphate + phosphoenolpyruvate + H2O = 3-deoxy-alpha-D-manno-2-octulosonate-8-phosphate + phosphate. It functions in the pathway carbohydrate biosynthesis; 3-deoxy-D-manno-octulosonate biosynthesis; 3-deoxy-D-manno-octulosonate from D-ribulose 5-phosphate: step 2/3. The protein operates within bacterial outer membrane biogenesis; lipopolysaccharide biosynthesis. This Bordetella avium (strain 197N) protein is 2-dehydro-3-deoxyphosphooctonate aldolase.